A 277-amino-acid chain; its full sequence is tRNA pseudouridine synthase A (277 aa).

Catalysis depends on Asp57, which acts as the Nucleophile. Tyr115 provides a ligand contact to substrate.

The protein belongs to the tRNA pseudouridine synthase TruA family. As to quaternary structure, homodimer.

It catalyses the reaction uridine(38/39/40) in tRNA = pseudouridine(38/39/40) in tRNA. Formation of pseudouridine at positions 38, 39 and 40 in the anticodon stem and loop of transfer RNAs. In Nitratidesulfovibrio vulgaris (strain DSM 19637 / Miyazaki F) (Desulfovibrio vulgaris), this protein is tRNA pseudouridine synthase A.